The sequence spans 355 residues: Peptide chain release factor 1 (355 aa).

N5-methylglutamine is present on Gln-232.

It belongs to the prokaryotic/mitochondrial release factor family. In terms of processing, methylated by PrmC. Methylation increases the termination efficiency of RF1.

The protein localises to the cytoplasm. Peptide chain release factor 1 directs the termination of translation in response to the peptide chain termination codons UAG and UAA. The polypeptide is Peptide chain release factor 1 (Thermobifida fusca (strain YX)).